The following is a 261-amino-acid chain: Ribonuclease PH (261 aa).

Residues Arg-87 and 125–127 contribute to the phosphate site; that span reads GTR.

This sequence belongs to the RNase PH family. Homohexameric ring arranged as a trimer of dimers.

The catalysed reaction is tRNA(n+1) + phosphate = tRNA(n) + a ribonucleoside 5'-diphosphate. Phosphorolytic 3'-5' exoribonuclease that plays an important role in tRNA 3'-end maturation. Removes nucleotide residues following the 3'-CCA terminus of tRNAs; can also add nucleotides to the ends of RNA molecules by using nucleoside diphosphates as substrates, but this may not be physiologically important. Probably plays a role in initiation of 16S rRNA degradation (leading to ribosome degradation) during starvation. The sequence is that of Ribonuclease PH from Desulforudis audaxviator (strain MP104C).